We begin with the raw amino-acid sequence, 202 residues long: Precorrin-2 dehydrogenase (202 aa).

Residues 20 to 21 (TI) and 41 to 42 (PT) contribute to the NAD(+) site.

This sequence belongs to the precorrin-2 dehydrogenase / sirohydrochlorin ferrochelatase family. Homodimer.

It catalyses the reaction precorrin-2 + NAD(+) = sirohydrochlorin + NADH + 2 H(+). Its pathway is cofactor biosynthesis; adenosylcobalamin biosynthesis; sirohydrochlorin from precorrin-2: step 1/1. It functions in the pathway porphyrin-containing compound metabolism; siroheme biosynthesis; sirohydrochlorin from precorrin-2: step 1/1. In terms of biological role, catalyzes the dehydrogenation of precorrin-2 to form sirohydrochlorin which is used as a precursor in both siroheme biosynthesis and in the anaerobic branch of adenosylcobalamin biosynthesis. It is unable to oxidize precorrin-3. This chain is Precorrin-2 dehydrogenase (sirC), found in Priestia megaterium (Bacillus megaterium).